A 154-amino-acid polypeptide reads, in one-letter code: Cyanate hydratase (154 aa).

Active-site residues include Arg-100, Glu-103, and Ser-126.

Belongs to the cyanase family.

It carries out the reaction cyanate + hydrogencarbonate + 3 H(+) = NH4(+) + 2 CO2. Catalyzes the reaction of cyanate with bicarbonate to produce ammonia and carbon dioxide. This chain is Cyanate hydratase, found in Aspergillus clavatus (strain ATCC 1007 / CBS 513.65 / DSM 816 / NCTC 3887 / NRRL 1 / QM 1276 / 107).